Here is a 444-residue protein sequence, read N- to C-terminus: Phosphoglucosamine mutase (444 aa).

Ser103 serves as the catalytic Phosphoserine intermediate. The Mg(2+) site is built by Ser103, Asp242, Asp244, and Asp246. Ser103 bears the Phosphoserine mark.

It belongs to the phosphohexose mutase family. It depends on Mg(2+) as a cofactor. Post-translationally, activated by phosphorylation.

The catalysed reaction is alpha-D-glucosamine 1-phosphate = D-glucosamine 6-phosphate. Functionally, catalyzes the conversion of glucosamine-6-phosphate to glucosamine-1-phosphate. The chain is Phosphoglucosamine mutase from Hydrogenovibrio crunogenus (strain DSM 25203 / XCL-2) (Thiomicrospira crunogena).